Consider the following 91-residue polypeptide: Large ribosomal subunit protein bL27 (91 aa).

A compositionally biased stretch (polar residues) spans 1 to 13; sequence MATKKSGGSSCNG. Positions 1–20 are disordered; the sequence is MATKKSGGSSCNGRDSRGRR.

The protein belongs to the bacterial ribosomal protein bL27 family.

This chain is Large ribosomal subunit protein bL27, found in Anaplasma phagocytophilum (strain HZ).